The primary structure comprises 368 residues: GDP-fucose transporter 1 (368 aa).

The next 9 helical transmembrane spans lie at 64–84 (LSTI…LVFL), 98–118 (LFIT…MTSI), 141–161 (VLPV…CLEY), 166–186 (FYQV…YIVL), 195–215 (TMAC…EVNF), 217–237 (WLGI…SIAV), 251–271 (LSIY…LVSG), 287–307 (FWFY…SVFM), and 332–352 (AVVF…LLVI).

Belongs to the TPT transporter family. SLC35C subfamily.

The protein localises to the golgi apparatus membrane. The enzyme catalyses GMP(out) + GDP-beta-L-fucose(in) = GMP(in) + GDP-beta-L-fucose(out). Its function is as follows. Antiporter specific for GDP-l-fucose and depending on the concomitant reverse transport of GMP. Involved in GDP-fucose import from the cytoplasm into the Golgi lumen. The polypeptide is GDP-fucose transporter 1 (slc35c1) (Dictyostelium discoideum (Social amoeba)).